The following is a 144-amino-acid chain: Small ribosomal subunit protein uS9 (144 aa).

Threonine 2 bears the N-acetylthreonine mark. A disordered region spans residues 124–144; it reads RRESKKFGGPGARARYQKSYR.

This sequence belongs to the universal ribosomal protein uS9 family.

In Caenorhabditis elegans, this protein is Small ribosomal subunit protein uS9 (rps-16).